A 73-amino-acid polypeptide reads, in one-letter code: Putative antitoxin VapB9 (73 aa).

Its function is as follows. Antitoxin component of a possible type II toxin-antitoxin (TA) system. The cognate toxin is VapC9. The sequence is that of Putative antitoxin VapB9 (vapB9) from Mycobacterium tuberculosis (strain CDC 1551 / Oshkosh).